The sequence spans 426 residues: MASTVSFSPANVQMLQGRSCHGHAAFGGCSAVPRTGPRMRSVAVRVSSEQEAAPAVRAPSGRTIEECEADAVAGRFPAPPPLVRPKAPEGTPQIRPLDLTKRPRRNRRSPALRAAFQETTISPANLVLPLFIHEGEDDAPIGAMPGCYRLGWRHGLLDEVYKSRDVGVNSFVLFPKVPDALKSQSGDEAYNDNGLVPRTIRLLKDKFPDIVVYTDVALDPYSSDGHDGIVREDGVIMNDETVYQLCKQAVSQARAGADVVSPSDMMDGRVGAIRAALDAEGFHDVSIMSYTAKYASSFYGPFREALDSNPRFGDKKTYQMNPANYREALLETAADEAEGADILLVKPGLPYLDVIRLLRDNSALPIAAYQVSGEYSMIKAGGALNMIDEEKVMMESLMCLRRAGADIILTYFARQAANVLCGMRSN.

Residues 1 to 45 constitute a chloroplast transit peptide; that stretch reads MASTVSFSPANVQMLQGRSCHGHAAFGGCSAVPRTGPRMRSVAVR. The segment at 74–107 is disordered; sequence GRFPAPPPLVRPKAPEGTPQIRPLDLTKRPRRNR. The active-site Schiff-base intermediate with substrate is Lys-293. 5-aminolevulinate contacts are provided by Arg-303 and Lys-315. Mg(2+) is bound at residue Glu-331. Residue Lys-346 is the Schiff-base intermediate with substrate of the active site. 2 residues coordinate 5-aminolevulinate: Ser-372 and Tyr-411.

Belongs to the ALAD family. In terms of assembly, homooctamer. Mg(2+) is required as a cofactor.

Its subcellular location is the plastid. The protein resides in the chloroplast. The enzyme catalyses 2 5-aminolevulinate = porphobilinogen + 2 H2O + H(+). Its pathway is porphyrin-containing compound metabolism; protoporphyrin-IX biosynthesis; coproporphyrinogen-III from 5-aminolevulinate: step 1/4. Its function is as follows. Catalyzes an early step in the biosynthesis of tetrapyrroles. Binds two molecules of 5-aminolevulinate per subunit, each at a distinct site, and catalyzes their condensation to form porphobilinogen. The sequence is that of Delta-aminolevulinic acid dehydratase, chloroplastic (HEMB) from Oryza sativa subsp. japonica (Rice).